Reading from the N-terminus, the 116-residue chain is Aspartate 1-decarboxylase (116 aa).

Ser25 serves as the catalytic Schiff-base intermediate with substrate; via pyruvic acid. Pyruvic acid (Ser) is present on Ser25. Thr57 contributes to the substrate binding site. Tyr58 functions as the Proton donor in the catalytic mechanism. 72–74 (GAA) serves as a coordination point for substrate.

Belongs to the PanD family. As to quaternary structure, heterooctamer of four alpha and four beta subunits. Pyruvate is required as a cofactor. In terms of processing, is synthesized initially as an inactive proenzyme, which is activated by self-cleavage at a specific serine bond to produce a beta-subunit with a hydroxyl group at its C-terminus and an alpha-subunit with a pyruvoyl group at its N-terminus.

It localises to the cytoplasm. It carries out the reaction L-aspartate + H(+) = beta-alanine + CO2. It participates in cofactor biosynthesis; (R)-pantothenate biosynthesis; beta-alanine from L-aspartate: step 1/1. Catalyzes the pyruvoyl-dependent decarboxylation of aspartate to produce beta-alanine. The sequence is that of Aspartate 1-decarboxylase from Helicobacter pylori (strain HPAG1).